The chain runs to 206 residues: Small ribosomal subunit protein uS4A (206 aa).

Positions 98 to 164 constitute an S4 RNA-binding domain; it reads MRLDNVVYRL…EKFKTFAENP (67 aa).

Belongs to the universal ribosomal protein uS4 family. In terms of assembly, part of the 30S ribosomal subunit. Contacts protein S5. The interaction surface between S4 and S5 is involved in control of translational fidelity.

One of the primary rRNA binding proteins, it binds directly to 16S rRNA where it nucleates assembly of the body of the 30S subunit. In terms of biological role, with S5 and S12 plays an important role in translational accuracy. The protein is Small ribosomal subunit protein uS4A of Clostridium botulinum (strain ATCC 19397 / Type A).